A 403-amino-acid chain; its full sequence is Phosphopentomutase (403 aa).

Residues D13, D298, H303, D339, H340, and H351 each coordinate Mn(2+).

It belongs to the phosphopentomutase family. Mn(2+) is required as a cofactor.

The protein localises to the cytoplasm. It carries out the reaction 2-deoxy-alpha-D-ribose 1-phosphate = 2-deoxy-D-ribose 5-phosphate. The catalysed reaction is alpha-D-ribose 1-phosphate = D-ribose 5-phosphate. The protein operates within carbohydrate degradation; 2-deoxy-D-ribose 1-phosphate degradation; D-glyceraldehyde 3-phosphate and acetaldehyde from 2-deoxy-alpha-D-ribose 1-phosphate: step 1/2. Its function is as follows. Isomerase that catalyzes the conversion of deoxy-ribose 1-phosphate (dRib-1-P) and ribose 1-phosphate (Rib-1-P) to deoxy-ribose 5-phosphate (dRib-5-P) and ribose 5-phosphate (Rib-5-P), respectively. The chain is Phosphopentomutase from Streptococcus suis (strain 05ZYH33).